A 435-amino-acid chain; its full sequence is Ribosomal protein uS12 methylthiotransferase RimO (435 aa).

Residues 3–113 (HKVGFVSLGC…VVNAVHQYLP (111 aa)) enclose the MTTase N-terminal domain. Positions 12, 48, 77, 144, 148, and 151 each coordinate [4Fe-4S] cluster. Residues 130 to 367 (LTPRHYAYLK…MQVQAEISRN (238 aa)) enclose the Radical SAM core domain. The region spanning 370–435 (KNKIGSTQTV…DDYDLYASLV (66 aa)) is the TRAM domain.

The protein belongs to the methylthiotransferase family. RimO subfamily. It depends on [4Fe-4S] cluster as a cofactor.

The protein localises to the cytoplasm. It catalyses the reaction L-aspartate(89)-[ribosomal protein uS12]-hydrogen + (sulfur carrier)-SH + AH2 + 2 S-adenosyl-L-methionine = 3-methylsulfanyl-L-aspartate(89)-[ribosomal protein uS12]-hydrogen + (sulfur carrier)-H + 5'-deoxyadenosine + L-methionine + A + S-adenosyl-L-homocysteine + 2 H(+). Catalyzes the methylthiolation of an aspartic acid residue of ribosomal protein uS12. In Legionella pneumophila subsp. pneumophila (strain Philadelphia 1 / ATCC 33152 / DSM 7513), this protein is Ribosomal protein uS12 methylthiotransferase RimO.